The sequence spans 216 residues: NADH-quinone oxidoreductase subunit C (216 aa).

It belongs to the complex I 30 kDa subunit family. As to quaternary structure, NDH-1 is composed of 14 different subunits. Subunits NuoB, C, D, E, F, and G constitute the peripheral sector of the complex.

It is found in the cell inner membrane. The enzyme catalyses a quinone + NADH + 5 H(+)(in) = a quinol + NAD(+) + 4 H(+)(out). NDH-1 shuttles electrons from NADH, via FMN and iron-sulfur (Fe-S) centers, to quinones in the respiratory chain. The immediate electron acceptor for the enzyme in this species is believed to be ubiquinone. Couples the redox reaction to proton translocation (for every two electrons transferred, four hydrogen ions are translocated across the cytoplasmic membrane), and thus conserves the redox energy in a proton gradient. The chain is NADH-quinone oxidoreductase subunit C from Francisella tularensis subsp. holarctica (strain OSU18).